The chain runs to 272 residues: Ethanolamine ammonia-lyase small subunit (272 aa).

The adenosylcob(III)alamin site is built by V161, E182, and C211.

Belongs to the EutC family. In terms of assembly, the basic unit is a heterodimer which dimerizes to form tetramers. The heterotetramers trimerize; 6 large subunits form a core ring with 6 small subunits projecting outwards. Requires adenosylcob(III)alamin as cofactor.

It localises to the bacterial microcompartment. It carries out the reaction ethanolamine = acetaldehyde + NH4(+). The protein operates within amine and polyamine degradation; ethanolamine degradation. Functionally, catalyzes the deamination of various vicinal amino-alcohols to oxo compounds. Allows this organism to utilize ethanolamine as the sole source of nitrogen and carbon in the presence of external vitamin B12. The protein is Ethanolamine ammonia-lyase small subunit of Pseudomonas putida (strain ATCC 700007 / DSM 6899 / JCM 31910 / BCRC 17059 / LMG 24140 / F1).